The chain runs to 193 residues: Rho-related GTP-binding protein RhoA-C (193 aa).

Residues 12 to 19, 30 to 37, 59 to 63, 117 to 120, and 160 to 162 contribute to the GTP site; these read GDGACGKT, FPEVYVPT, DTAGQ, NKKD, and SAK. Tyr-34 is a glycosylation site ((Microbial infection) O-linked (GlcNAc) tyrosine; by Yersinia Afp18). The residue at position 190 (Cys-190) is a Cysteine methyl ester. Cys-190 is lipidated: S-geranylgeranyl cysteine. Residues 191 to 193 constitute a propeptide, removed in mature form; that stretch reads LLL.

The protein belongs to the small GTPase superfamily. Rho family. Post-translationally, (Microbial infection) Glycosylated at Tyr-34 by Yersinia ruckeri toxin Afp18. Mono-O-GlcNAcylation by Afp18 inhibits RhoA activation by guanine nucleotide exchange factors and blocks RhoA signaling.

Its subcellular location is the cell membrane. Functionally, regulates a signal transduction pathway linking plasma membrane receptors to the assembly of focal adhesions and actin stress fibers. This is Rho-related GTP-binding protein RhoA-C from Danio rerio (Zebrafish).